The primary structure comprises 451 residues: uncharacterized protein (451 aa).

Positions 305, 316, 384, 414, and 428 each coordinate Mn(2+).

It belongs to the peptidase M24B family. Mn(2+) is required as a cofactor.

This is an uncharacterized protein from Schizosaccharomyces pombe (strain 972 / ATCC 24843) (Fission yeast).